The following is a 356-amino-acid chain: Holliday junction branch migration complex subunit RuvB (356 aa).

Residues 13-201 (SSNLSRKTRL…FGITQRLNFY (189 aa)) are large ATPase domain (RuvB-L). Residues 15 to 35 (NLSRKTRLLDPTPSLEEGKVR) form a disordered region. Residues Leu-40, Arg-41, Gly-82, Lys-85, Thr-86, Thr-87, 148 to 150 (EDF), Arg-191, Tyr-201, and Arg-238 each bind ATP. Thr-86 contacts Mg(2+). Positions 202–273 (SISDLNRIIQ…LVDKSLTLHQ (72 aa)) are small ATPAse domain (RuvB-S). The interval 276 to 356 (ECGLDQSDRR…NSCKNSPIIK (81 aa)) is head domain (RuvB-H). 2 residues coordinate DNA: Arg-331 and Arg-336.

The protein belongs to the RuvB family. As to quaternary structure, homohexamer. Forms an RuvA(8)-RuvB(12)-Holliday junction (HJ) complex. HJ DNA is sandwiched between 2 RuvA tetramers; dsDNA enters through RuvA and exits via RuvB. An RuvB hexamer assembles on each DNA strand where it exits the tetramer. Each RuvB hexamer is contacted by two RuvA subunits (via domain III) on 2 adjacent RuvB subunits; this complex drives branch migration. In the full resolvosome a probable DNA-RuvA(4)-RuvB(12)-RuvC(2) complex forms which resolves the HJ.

The protein localises to the cytoplasm. It catalyses the reaction ATP + H2O = ADP + phosphate + H(+). The RuvA-RuvB-RuvC complex processes Holliday junction (HJ) DNA during genetic recombination and DNA repair, while the RuvA-RuvB complex plays an important role in the rescue of blocked DNA replication forks via replication fork reversal (RFR). RuvA specifically binds to HJ cruciform DNA, conferring on it an open structure. The RuvB hexamer acts as an ATP-dependent pump, pulling dsDNA into and through the RuvAB complex. RuvB forms 2 homohexamers on either side of HJ DNA bound by 1 or 2 RuvA tetramers; 4 subunits per hexamer contact DNA at a time. Coordinated motions by a converter formed by DNA-disengaged RuvB subunits stimulates ATP hydrolysis and nucleotide exchange. Immobilization of the converter enables RuvB to convert the ATP-contained energy into a lever motion, pulling 2 nucleotides of DNA out of the RuvA tetramer per ATP hydrolyzed, thus driving DNA branch migration. The RuvB motors rotate together with the DNA substrate, which together with the progressing nucleotide cycle form the mechanistic basis for DNA recombination by continuous HJ branch migration. Branch migration allows RuvC to scan DNA until it finds its consensus sequence, where it cleaves and resolves cruciform DNA. The sequence is that of Holliday junction branch migration complex subunit RuvB from Prochlorococcus marinus (strain SARG / CCMP1375 / SS120).